A 274-amino-acid chain; its full sequence is NH(3)-dependent NAD(+) synthetase (274 aa).

An ATP-binding site is contributed by 46-53; sequence GISGGQDS. Aspartate 52 lines the Mg(2+) pocket. Arginine 140 lines the deamido-NAD(+) pocket. An ATP-binding site is contributed by threonine 160. Glutamate 165 provides a ligand contact to Mg(2+). The deamido-NAD(+) site is built by lysine 173 and aspartate 180. ATP is bound by residues lysine 189 and threonine 211. 260-261 contacts deamido-NAD(+); that stretch reads HK.

It belongs to the NAD synthetase family. In terms of assembly, homodimer.

The catalysed reaction is deamido-NAD(+) + NH4(+) + ATP = AMP + diphosphate + NAD(+) + H(+). It participates in cofactor biosynthesis; NAD(+) biosynthesis; NAD(+) from deamido-NAD(+) (ammonia route): step 1/1. In terms of biological role, catalyzes the ATP-dependent amidation of deamido-NAD to form NAD. Uses ammonia as a nitrogen source. This chain is NH(3)-dependent NAD(+) synthetase, found in Streptococcus pyogenes serotype M3 (strain ATCC BAA-595 / MGAS315).